A 251-amino-acid chain; its full sequence is Exotoxin type A (251 aa).

Positions 1 to 30 (MENNKKVLKKMVFFVLVTFLGLTISQEVFA) are cleaved as a signal peptide. A disulfide bridge links Cys117 with Cys128.

Belongs to the staphylococcal/streptococcal toxin family.

In terms of biological role, causative agent of the symptoms associated with scarlet fever, have been associated with streptococcal toxic shock-like disease and may play a role in the early events of rheumatic fever. This is Exotoxin type A (speA) from Streptococcus pyogenes serotype M18 (strain MGAS8232).